A 748-amino-acid polypeptide reads, in one-letter code: Phosphoribosylformylglycinamidine synthase subunit PurL (748 aa).

His47 is a catalytic residue. 2 residues coordinate ATP: Tyr50 and Lys90. Residue Glu92 participates in Mg(2+) binding. Substrate is bound by residues 93-96 and Arg115; that span reads SHNH. His94 acts as the Proton acceptor in catalysis. Residue Asp116 participates in Mg(2+) binding. Gln240 contributes to the substrate binding site. Mg(2+) is bound at residue Asp268. 312-314 is a substrate binding site; that stretch reads ESQ. The ATP site is built by Asn500 and Gly537. Asn538 lines the Mg(2+) pocket. Residue Ser540 coordinates substrate.

It belongs to the FGAMS family. As to quaternary structure, monomer. Part of the FGAM synthase complex composed of 1 PurL, 1 PurQ and 2 PurS subunits.

It localises to the cytoplasm. It catalyses the reaction N(2)-formyl-N(1)-(5-phospho-beta-D-ribosyl)glycinamide + L-glutamine + ATP + H2O = 2-formamido-N(1)-(5-O-phospho-beta-D-ribosyl)acetamidine + L-glutamate + ADP + phosphate + H(+). It functions in the pathway purine metabolism; IMP biosynthesis via de novo pathway; 5-amino-1-(5-phospho-D-ribosyl)imidazole from N(2)-formyl-N(1)-(5-phospho-D-ribosyl)glycinamide: step 1/2. Functionally, part of the phosphoribosylformylglycinamidine synthase complex involved in the purines biosynthetic pathway. Catalyzes the ATP-dependent conversion of formylglycinamide ribonucleotide (FGAR) and glutamine to yield formylglycinamidine ribonucleotide (FGAM) and glutamate. The FGAM synthase complex is composed of three subunits. PurQ produces an ammonia molecule by converting glutamine to glutamate. PurL transfers the ammonia molecule to FGAR to form FGAM in an ATP-dependent manner. PurS interacts with PurQ and PurL and is thought to assist in the transfer of the ammonia molecule from PurQ to PurL. The protein is Phosphoribosylformylglycinamidine synthase subunit PurL of Leptospira biflexa serovar Patoc (strain Patoc 1 / Ames).